Here is a 132-residue protein sequence, read N- to C-terminus: DNA-directed RNA polymerase subunit omega (132 aa).

The protein belongs to the RNA polymerase subunit omega family. As to quaternary structure, the RNAP catalytic core consists of 2 alpha, 1 beta, 1 beta' and 1 omega subunit. When a sigma factor is associated with the core the holoenzyme is formed, which can initiate transcription.

It carries out the reaction RNA(n) + a ribonucleoside 5'-triphosphate = RNA(n+1) + diphosphate. Its function is as follows. Promotes RNA polymerase assembly. Latches the N- and C-terminal regions of the beta' subunit thereby facilitating its interaction with the beta and alpha subunits. This Bartonella quintana (strain Toulouse) (Rochalimaea quintana) protein is DNA-directed RNA polymerase subunit omega.